Reading from the N-terminus, the 191-residue chain is Small ribosomal subunit protein uS5 (191 aa).

The region spanning 21-84 (FADRLVAINR…EQAKRQMIRV (64 aa)) is the S5 DRBM domain. Residues 155–191 (LRKESSPRSVAQRRGKKVADILPKVDAAPAPAETAEA) are disordered. Over residues 181-191 (AAPAPAETAEA) the composition is skewed to low complexity.

Belongs to the universal ribosomal protein uS5 family. As to quaternary structure, part of the 30S ribosomal subunit. Contacts proteins S4 and S8.

In terms of biological role, with S4 and S12 plays an important role in translational accuracy. Its function is as follows. Located at the back of the 30S subunit body where it stabilizes the conformation of the head with respect to the body. This chain is Small ribosomal subunit protein uS5, found in Roseobacter denitrificans (strain ATCC 33942 / OCh 114) (Erythrobacter sp. (strain OCh 114)).